The chain runs to 147 residues: MVHFTTEENVAVASLWAKVNVEVVGGESLARLLIVCPWTQRFFDSFGNLYSESAIMGNPKVKVYGRKVLNSFGNAIKHMDDLKGTFADLSELHCDKLHVDPENFRLLGNMILIVLATHFSKEFTPQMQAAWQKLTNAVANALTHKYH.

The region spanning 3–147 is the Globin domain; sequence HFTTEENVAV…VANALTHKYH (145 aa). Positions 64 and 93 each coordinate heme b.

This sequence belongs to the globin family. Red blood cells.

Hemoglobin epsilon chain is a beta-type chain found in early embryos. The protein is Hemoglobin subunit epsilon-2 (HBE2) of Bos taurus (Bovine).